The primary structure comprises 401 residues: Lipid-A-disaccharide synthase (401 aa).

This sequence belongs to the LpxB family.

The catalysed reaction is a lipid X + a UDP-2-N,3-O-bis[(3R)-3-hydroxyacyl]-alpha-D-glucosamine = a lipid A disaccharide + UDP + H(+). Its pathway is bacterial outer membrane biogenesis; LPS lipid A biosynthesis. Functionally, condensation of UDP-2,3-diacylglucosamine and 2,3-diacylglucosamine-1-phosphate to form lipid A disaccharide, a precursor of lipid A, a phosphorylated glycolipid that anchors the lipopolysaccharide to the outer membrane of the cell. This Rhodospirillum centenum (strain ATCC 51521 / SW) protein is Lipid-A-disaccharide synthase.